A 165-amino-acid polypeptide reads, in one-letter code: Regulator of ribonuclease activity A (165 aa).

It belongs to the RraA family. In terms of assembly, homotrimer. Binds to both RNA-binding sites in the C-terminal region of Rne and to RhlB.

The protein resides in the cytoplasm. Functionally, globally modulates RNA abundance by binding to RNase E (Rne) and regulating its endonucleolytic activity. Can modulate Rne action in a substrate-dependent manner by altering the composition of the degradosome. Modulates RNA-binding and helicase activities of the degradosome. The sequence is that of Regulator of ribonuclease activity A from Actinobacillus pleuropneumoniae serotype 7 (strain AP76).